We begin with the raw amino-acid sequence, 312 residues long: Ubiquinone biosynthesis protein COQ9, mitochondrial (312 aa).

Residues 1 to 45 constitute a mitochondrion transit peptide; the sequence is MAATAAVSGVLRRLGWRLLQLRCLPVARCQSPLMPRAFHTAVGFR. Positions 17-32 match the SIFI-degron motif; that stretch reads RLLQLRCLPVARCQSP. The interval 43–92 is disordered; that stretch reads GFRSSEEQRQQPPHSSQQHSETQGPEFSRPPPRYTDQSGEEEEDYESEEQ. Over residues 52–63 the composition is skewed to low complexity; sequence QQPPHSSQQHSE. S80 carries the post-translational modification Phosphoserine. The segment covering 80-91 has biased composition (acidic residues); the sequence is SGEEEEDYESEE. K169 bears the N6-acetyllysine mark. R238 contacts a 1,2-diacylglycero-3-phosphoethanolamine.

It belongs to the COQ9 family. As to quaternary structure, homodimer. Heterodimer; two heterodimers of COQ7:COQ9 come together on the same side of the lipid pseudo-bilayer and form a curved tetramer with a hydrophobic surface suitable for membrane interaction. These two tetramers assemble into a soluble octamer with a pseudo-bilayer of lipids captured within. Interacts with COQ7; this interaction allows ubiquinone (CoQ) isoprene intermediates presentation to COQ7 and facilitates the COQ7-mediated hydroxylase step. In terms of processing, in response to mitochondrial stress, the precursor protein is ubiquitinated by the SIFI complex in the cytoplasm before mitochondrial import, leading to its degradation. Within the SIFI complex, UBR4 initiates ubiquitin chain that are further elongated or branched by KCMF1.

It is found in the mitochondrion. It participates in cofactor biosynthesis; ubiquinone biosynthesis. In terms of biological role, membrane-associated protein that warps the membrane surface to access and bind aromatic isoprenes with high specificity, including ubiquinone (CoQ) isoprene intermediates and presents them directly to COQ7, therefore facilitating the COQ7-mediated hydroxylase step. Participates in the biosynthesis of coenzyme Q, also named ubiquinone, an essential lipid-soluble electron transporter for aerobic cellular respiration. The chain is Ubiquinone biosynthesis protein COQ9, mitochondrial from Rattus norvegicus (Rat).